Here is a 412-residue protein sequence, read N- to C-terminus: MEARLSETLGLPSPNLNHCHFPNEFNSLFTHFSDLTSVQSPIVRNPKLKTKSSQKPPKFSANFRRSDPPFASTSISDPTHEKPGPEFLKWIKPASRSSPRIQTLIKQLSVWERAIIGAGAGGLAGAFTYVTLLPLDAIKTKLQTKGASQVYSNTFDAIVKTFQAKGILGFYSGVSAVIVGSTFSSAVYFGTCEFGKSLLSKFPDFPTVLIPPTAGAMGNIISSAIMVPKELITQRMQAGASGRSYQVLLKILEKDGILGLYAGYSATLLRNLPAGVLSYSSFEYLKAAVLEKTKQSHLEPLQSVCCGALAGAISASITTPLDVVKTRLMTQIHVEAVDKLGGAMYTGVAGTVKQILTEEGWVGFTRGMGPRVVHSACFSAIGYFAFETARLTILNEYLKRKEESEANVAADS.

The N-terminal 92 residues, 1–92 (MEARLSETLG…PGPEFLKWIK (92 aa)), are a transit peptide targeting the chloroplast. The tract at residues 43-83 (VRNPKLKTKSSQKPPKFSANFRRSDPPFASTSISDPTHEKP) is disordered. Solcar repeat units follow at residues 112-198 (ERAI…GKSL), 206-288 (PTVL…LKAA), and 298-392 (LEPL…ARLT). Helical transmembrane passes span 115 to 135 (IIGA…LLPL), 167 to 187 (ILGF…SSAV), 208 to 228 (VLIP…IMVP), 262 to 282 (AGYS…YSSF), 303 to 323 (SVCC…PLDV), and 365 to 385 (TRGM…GYFA).

It belongs to the mitochondrial carrier (TC 2.A.29) family. As to expression, expressed in leaves, developing flowers and siliques.

Its subcellular location is the plastid. The protein resides in the chloroplast inner membrane. In terms of biological role, probably involved in iron transport into chloroplasts. The chain is Protein MITOFERRINLIKE 1, chloroplastic (MFL1) from Arabidopsis thaliana (Mouse-ear cress).